Here is a 101-residue protein sequence, read N- to C-terminus: Small ribosomal subunit protein uS14 (101 aa).

Positions 1–11 (MAKKSSVEKNN) are enriched in basic and acidic residues. The segment at 1–22 (MAKKSSVEKNNRRQRMVKNAAA) is disordered. Residues 12–22 (RRQRMVKNAAA) show a composition bias toward basic residues.

This sequence belongs to the universal ribosomal protein uS14 family. As to quaternary structure, part of the 30S ribosomal subunit. Contacts proteins S3 and S10.

Binds 16S rRNA, required for the assembly of 30S particles and may also be responsible for determining the conformation of the 16S rRNA at the A site. The polypeptide is Small ribosomal subunit protein uS14 (Afipia carboxidovorans (strain ATCC 49405 / DSM 1227 / KCTC 32145 / OM5) (Oligotropha carboxidovorans)).